The primary structure comprises 385 residues: Putative F-box protein At1g47765 (385 aa).

Positions 1 to 19 (MEQQKQKKRKVVSKSKRTQ) are enriched in basic residues. A disordered region spans residues 1 to 24 (MEQQKQKKRKVVSKSKRTQSKSAS). Positions 20–69 (SKSASSLPLDLTSEILLRLPEKSIARFRCVSKLWLSITTDPYFINLFETR) constitute an F-box domain.

This is Putative F-box protein At1g47765 from Arabidopsis thaliana (Mouse-ear cress).